Reading from the N-terminus, the 250-residue chain is 7-carboxy-7-deazaguanine synthase (250 aa).

Residues 15–17 (VQG) and Arg-30 each bind substrate. The Radical SAM core domain maps to 21–250 (LIGLRQVFIR…PQTHRFMGQL (230 aa)). [4Fe-4S] cluster contacts are provided by Cys-34, Cys-38, and Cys-41. A Mg(2+)-binding site is contributed by Thr-43. Position 96 (Thr-96) interacts with substrate. Gly-98 contacts S-adenosyl-L-methionine.

Belongs to the radical SAM superfamily. 7-carboxy-7-deazaguanine synthase family. In terms of assembly, homodimer. [4Fe-4S] cluster is required as a cofactor. S-adenosyl-L-methionine serves as cofactor. The cofactor is Mg(2+).

The catalysed reaction is 6-carboxy-5,6,7,8-tetrahydropterin + H(+) = 7-carboxy-7-deazaguanine + NH4(+). Its pathway is purine metabolism; 7-cyano-7-deazaguanine biosynthesis. In terms of biological role, catalyzes the complex heterocyclic radical-mediated conversion of 6-carboxy-5,6,7,8-tetrahydropterin (CPH4) to 7-carboxy-7-deazaguanine (CDG), a step common to the biosynthetic pathways of all 7-deazapurine-containing compounds. The polypeptide is 7-carboxy-7-deazaguanine synthase (Geobacter sulfurreducens (strain ATCC 51573 / DSM 12127 / PCA)).